A 171-amino-acid chain; its full sequence is 3-hydroxydecanoyl-[acyl-carrier-protein] dehydratase (171 aa).

His70 is an active-site residue.

The protein belongs to the thioester dehydratase family. FabA subfamily. In terms of assembly, homodimer.

The protein localises to the cytoplasm. The catalysed reaction is a (3R)-hydroxyacyl-[ACP] = a (2E)-enoyl-[ACP] + H2O. The enzyme catalyses (3R)-hydroxydecanoyl-[ACP] = (2E)-decenoyl-[ACP] + H2O. It carries out the reaction (2E)-decenoyl-[ACP] = (3Z)-decenoyl-[ACP]. Its pathway is lipid metabolism; fatty acid biosynthesis. In terms of biological role, necessary for the introduction of cis unsaturation into fatty acids. Catalyzes the dehydration of (3R)-3-hydroxydecanoyl-ACP to E-(2)-decenoyl-ACP and then its isomerization to Z-(3)-decenoyl-ACP. Can catalyze the dehydratase reaction for beta-hydroxyacyl-ACPs with saturated chain lengths up to 16:0, being most active on intermediate chain length. This Chromohalobacter salexigens (strain ATCC BAA-138 / DSM 3043 / CIP 106854 / NCIMB 13768 / 1H11) protein is 3-hydroxydecanoyl-[acyl-carrier-protein] dehydratase.